The sequence spans 304 residues: MDNTIPGGINITILIPNLMIIIFGLVGLTGNGIVFWLLGFCLHRNAFSVYILNLALADFFFLLGHIIDSILLLLNVFYPITFLLCFYTIMMVLYIAGLSMLSAISTERCLSVLCPIWYHCHRPEHTSTVMCAVIWVLSLLICILNSYFCGFLNTQYKNENGCLALNFFTAAYLMFLFVVLCLSSLALVARLFCGTGQIKLTRLYVTIILSILVFLLCGLPFGIHWFLLFKIKDDFHVFDLGFYLASVVLTAINSCANPIIYFFVGSFRHRLKHQTLKMVLQNALQDTPETAKIMVEMSRSKSEP.

The Extracellular segment spans residues 1-17 (MDNTIPGGINITILIPN). Asn10 is a glycosylation site (N-linked (GlcNAc...) asparagine). A helical transmembrane segment spans residues 18–38 (LMIIIFGLVGLTGNGIVFWLL). The Cytoplasmic portion of the chain corresponds to 39 to 53 (GFCLHRNAFSVYILN). Residues 54-74 (LALADFFFLLGHIIDSILLLL) form a helical membrane-spanning segment. Residue Asn75 is a topological domain, extracellular. The chain crosses the membrane as a helical span at residues 76–96 (VFYPITFLLCFYTIMMVLYIA). Residues 97–131 (GLSMLSAISTERCLSVLCPIWYHCHRPEHTSTVMC) lie on the Cytoplasmic side of the membrane. The chain crosses the membrane as a helical span at residues 132–152 (AVIWVLSLLICILNSYFCGFL). Residues 153–166 (NTQYKNENGCLALN) lie on the Extracellular side of the membrane. The helical transmembrane segment at 167 to 187 (FFTAAYLMFLFVVLCLSSLAL) threads the bilayer. Residues 188 to 206 (VARLFCGTGQIKLTRLYVT) are Cytoplasmic-facing. Residues 207-227 (IILSILVFLLCGLPFGIHWFL) traverse the membrane as a helical segment. Over 228-243 (LFKIKDDFHVFDLGFY) the chain is Extracellular. Residues 244 to 264 (LASVVLTAINSCANPIIYFFV) form a helical membrane-spanning segment. Residues 265-304 (GSFRHRLKHQTLKMVLQNALQDTPETAKIMVEMSRSKSEP) lie on the Cytoplasmic side of the membrane.

The protein belongs to the G-protein coupled receptor 1 family. Mas subfamily. As to expression, expressed in a subset of sensory neurons that includes nociceptors. Expressed in the subclass of non-peptidergic sensory neurons that are IB4(+) and VR1(-).

Its subcellular location is the cell membrane. Functionally, orphan receptor activated by a subset of RFamide-family neuropeptides such as FLRF-amide and FMRF-amide. Mediates its action by association with G proteins that activate a phosphatidylinositol-calcium second messenger system. Its effect is mediated by G(q) and G(11) proteins. May regulate the function of nociceptive neurons by modulation of pain perception. The polypeptide is Mas-related G-protein coupled receptor member A1 (Mrgpra1) (Mus musculus (Mouse)).